A 279-amino-acid chain; its full sequence is 4-deoxy-L-threo-5-hexosulose-uronate ketol-isomerase (279 aa).

Residues His-197, His-199, Glu-204, and His-246 each contribute to the Zn(2+) site.

This sequence belongs to the KduI family. Zn(2+) is required as a cofactor.

The catalysed reaction is 5-dehydro-4-deoxy-D-glucuronate = 3-deoxy-D-glycero-2,5-hexodiulosonate. Its pathway is glycan metabolism; pectin degradation; 2-dehydro-3-deoxy-D-gluconate from pectin: step 4/5. Functionally, catalyzes the isomerization of 5-dehydro-4-deoxy-D-glucuronate to 3-deoxy-D-glycero-2,5-hexodiulosonate. In Kineococcus radiotolerans (strain ATCC BAA-149 / DSM 14245 / SRS30216), this protein is 4-deoxy-L-threo-5-hexosulose-uronate ketol-isomerase.